The sequence spans 557 residues: Urocanate hydratase (557 aa).

Residues 53 to 54 (GG), Q131, 177 to 179 (GMG), 197 to 202 (ECQQSR), 243 to 244 (NA), 264 to 268 (QTSAH), 274 to 275 (YL), and 323 to 324 (YG) contribute to the NAD(+) site. Residue C411 is part of the active site. NAD(+) contacts are provided by residues 455-456 (RE) and G493.

As to quaternary structure, homodimer. Requires NAD(+) as cofactor.

The protein localises to the cytoplasm. It catalyses the reaction 4-imidazolone-5-propanoate = trans-urocanate + H2O. Its pathway is amino-acid degradation; L-histidine degradation into L-glutamate; N-formimidoyl-L-glutamate from L-histidine: step 2/3. In terms of biological role, catalyzes the conversion of urocanate to 4-imidazolone-5-propionate. This chain is Urocanate hydratase, found in Pseudomonas putida (Arthrobacter siderocapsulatus).